The primary structure comprises 105 residues: Small ribosomal subunit protein uS10c (105 aa).

It belongs to the universal ribosomal protein uS10 family. As to quaternary structure, part of the 30S ribosomal subunit.

Its subcellular location is the plastid. It localises to the chloroplast. Involved in the binding of tRNA to the ribosomes. The sequence is that of Small ribosomal subunit protein uS10c from Gracilaria tenuistipitata var. liui (Red alga).